The primary structure comprises 484 residues: Myosin-binding protein H (484 aa).

Residues 1-78 form a disordered region; that stretch reads MTGKATPEAS…KPEAPSEDVP (78 aa). 3 positions are modified to phosphothreonine: threonine 2, threonine 6, and threonine 26. Positions 41–71 are enriched in low complexity; it reads QEQAPEPQKQPQAQDPAAHEAPATPATTKPE. One can recognise a Fibronectin type-III 1 domain in the interval 80 to 175; that stretch reads APLQLTLEDV…LDQPVHIQEI (96 aa). In terms of domain architecture, Ig-like C2-type 1 spans 179–267; it reads PKIRVPRHLR…EGLEAKAAID (89 aa). The region spanning 276–371 is the Fibronectin type-III 2 domain; the sequence is PPSSIKLLDV…TKELAHIHKA (96 aa). Residues 389 to 479 enclose the Ig-like C2-type 2 domain; that stretch reads PSFTQPVADR…PAVDCRLEVK (91 aa).

The protein belongs to the immunoglobulin superfamily. MyBP family. As to expression, skeletal muscle.

Binds to myosin; probably involved in interaction with thick myofilaments in the A-band. This is Myosin-binding protein H (Mybph) from Rattus norvegicus (Rat).